The following is a 396-amino-acid chain: Elongation factor Tu (396 aa).

The region spanning 10–206 is the tr-type G domain; sequence KPHVNVGTIG…ALDTYIPTPE (197 aa). Positions 19–26 are G1; it reads GHVDHGKT. 19–26 is a GTP binding site; the sequence is GHVDHGKT. Residue T26 participates in Mg(2+) binding. Residues 60 to 64 are G2; sequence GITIN. A G3 region spans residues 81 to 84; sequence DCPG. GTP-binding positions include 81-85 and 136-139; these read DCPGH and NKCD. The segment at 136 to 139 is G4; it reads NKCD. The segment at 174–176 is G5; sequence SAK.

This sequence belongs to the TRAFAC class translation factor GTPase superfamily. Classic translation factor GTPase family. EF-Tu/EF-1A subfamily. In terms of assembly, monomer.

It localises to the cytoplasm. It carries out the reaction GTP + H2O = GDP + phosphate + H(+). Functionally, GTP hydrolase that promotes the GTP-dependent binding of aminoacyl-tRNA to the A-site of ribosomes during protein biosynthesis. In Polynucleobacter asymbioticus (strain DSM 18221 / CIP 109841 / QLW-P1DMWA-1) (Polynucleobacter necessarius subsp. asymbioticus), this protein is Elongation factor Tu.